Here is a 1073-residue protein sequence, read N- to C-terminus: Probable inorganic carbon transporter subunit DabA (1073 aa).

Cys551, Asp553, His742, and Cys757 together coordinate Zn(2+).

It belongs to the inorganic carbon transporter (TC 9.A.2) DabA family. In terms of assembly, forms a complex with DabB. Requires Zn(2+) as cofactor.

Its subcellular location is the cell inner membrane. Functionally, part of an energy-coupled inorganic carbon pump. The chain is Probable inorganic carbon transporter subunit DabA from Methylococcus capsulatus (strain ATCC 33009 / NCIMB 11132 / Bath).